The chain runs to 631 residues: Chaperone protein DnaK (631 aa).

The residue at position 198 (T198) is a Phosphothreonine; by autocatalysis. Positions 602 to 631 are disordered; that stretch reads EAAGGAQQAGKDDVVDAEFTEVDDDKKKSA.

Belongs to the heat shock protein 70 family.

Acts as a chaperone. This is Chaperone protein DnaK from Rhodopseudomonas palustris (strain ATCC BAA-98 / CGA009).